Reading from the N-terminus, the 406-residue chain is Dual-specificity RNA methyltransferase RlmN (406 aa).

Glu119 acts as the Proton acceptor in catalysis. One can recognise a Radical SAM core domain in the interval 125 to 370 (DKGRGTLCVS…AMVRRTRGDD (246 aa)). Cys132 and Cys375 are joined by a disulfide. The [4Fe-4S] cluster site is built by Cys139, Cys143, and Cys146. Residues 192–193 (GE), Ser224, 246–248 (SLH), and Asn332 each bind S-adenosyl-L-methionine. Cys375 (S-methylcysteine intermediate) is an active-site residue.

It belongs to the radical SAM superfamily. RlmN family. Requires [4Fe-4S] cluster as cofactor.

Its subcellular location is the cytoplasm. The catalysed reaction is adenosine(2503) in 23S rRNA + 2 reduced [2Fe-2S]-[ferredoxin] + 2 S-adenosyl-L-methionine = 2-methyladenosine(2503) in 23S rRNA + 5'-deoxyadenosine + L-methionine + 2 oxidized [2Fe-2S]-[ferredoxin] + S-adenosyl-L-homocysteine. The enzyme catalyses adenosine(37) in tRNA + 2 reduced [2Fe-2S]-[ferredoxin] + 2 S-adenosyl-L-methionine = 2-methyladenosine(37) in tRNA + 5'-deoxyadenosine + L-methionine + 2 oxidized [2Fe-2S]-[ferredoxin] + S-adenosyl-L-homocysteine. Specifically methylates position 2 of adenine 2503 in 23S rRNA and position 2 of adenine 37 in tRNAs. m2A2503 modification seems to play a crucial role in the proofreading step occurring at the peptidyl transferase center and thus would serve to optimize ribosomal fidelity. The polypeptide is Dual-specificity RNA methyltransferase RlmN (Xylella fastidiosa (strain M12)).